The sequence spans 390 residues: Chorismate synthase (390 aa).

Arg48 lines the NADP(+) pocket. FMN contacts are provided by residues 126–128, Gly286, 301–305, and Arg328; these read RAS and KPTSS.

This sequence belongs to the chorismate synthase family. The cofactor is FMNH2.

It catalyses the reaction 5-O-(1-carboxyvinyl)-3-phosphoshikimate = chorismate + phosphate. The protein operates within metabolic intermediate biosynthesis; chorismate biosynthesis; chorismate from D-erythrose 4-phosphate and phosphoenolpyruvate: step 7/7. Its function is as follows. Catalyzes the anti-1,4-elimination of the C-3 phosphate and the C-6 proR hydrogen from 5-enolpyruvylshikimate-3-phosphate (EPSP) to yield chorismate, which is the branch point compound that serves as the starting substrate for the three terminal pathways of aromatic amino acid biosynthesis. This reaction introduces a second double bond into the aromatic ring system. In Sulfurisphaera tokodaii (strain DSM 16993 / JCM 10545 / NBRC 100140 / 7) (Sulfolobus tokodaii), this protein is Chorismate synthase.